The following is a 461-amino-acid chain: Asparagine--tRNA ligase (461 aa).

This sequence belongs to the class-II aminoacyl-tRNA synthetase family. As to quaternary structure, homodimer.

The protein localises to the cytoplasm. It catalyses the reaction tRNA(Asn) + L-asparagine + ATP = L-asparaginyl-tRNA(Asn) + AMP + diphosphate + H(+). The polypeptide is Asparagine--tRNA ligase (Oleidesulfovibrio alaskensis (strain ATCC BAA-1058 / DSM 17464 / G20) (Desulfovibrio alaskensis)).